We begin with the raw amino-acid sequence, 117 residues long: Colipase (117 aa).

A signal peptide spans 1 to 22 (MNIFNILLPIVVLLLVFGLTAA). 5 cysteine pairs are disulfide-bonded: Cys39/Cys50, Cys45/Cys61, Cys49/Cys83, Cys71/Cys91, and Cys85/Cys109.

It belongs to the colipase family. As to quaternary structure, forms a 1:1 stoichiometric complex with pancreatic lipase.

The protein resides in the secreted. In terms of biological role, colipase is a cofactor of pancreatic lipase. It allows the lipase to anchor itself to the lipid-water interface. Without colipase the enzyme is washed off by bile salts, which have an inhibitory effect on the lipase. The sequence is that of Colipase (clps) from Xenopus tropicalis (Western clawed frog).